A 475-amino-acid chain; its full sequence is Putative UDP-glucose glucosyltransferase (475 aa).

The protein belongs to the UDP-glycosyltransferase family.

The polypeptide is Putative UDP-glucose glucosyltransferase (Fragaria ananassa (Strawberry)).